Reading from the N-terminus, the 115-residue chain is Large ribosomal subunit protein bL21 (115 aa).

The protein belongs to the bacterial ribosomal protein bL21 family. Part of the 50S ribosomal subunit. Contacts protein L20.

This protein binds to 23S rRNA in the presence of protein L20. The chain is Large ribosomal subunit protein bL21 from Coxiella burnetii (strain RSA 331 / Henzerling II).